Consider the following 223-residue polypeptide: UPF0441 protein YgiB (223 aa).

The span at 178-195 (TVPKTAMAPKPATTTTVT) shows a compositional bias: low complexity. The disordered stretch occupies residues 178–223 (TVPKTAMAPKPATTTTVTRGGFGESVAKQSTMQRSAAGTSTRSMGG). Polar residues predominate over residues 204 to 223 (AKQSTMQRSAAGTSTRSMGG).

The protein belongs to the UPF0441 family.

The sequence is that of UPF0441 protein YgiB from Salmonella enteritidis PT4 (strain P125109).